The primary structure comprises 204 residues: MEAQAQGLLETEPLQGTDEDAVASADFSSMLSEEEKEELKAELVQLEDEITTLRQVLSAKERHLVEIKQKLGMNLMNELKQNFSKSWHDMQTTTAYKKTHETLSHAGQKATAAFSNVGTAISKKFGDMSYSIRHSISMPAMRNSPTFKSFEERVETTVTSLKTKVGGTNPNGGSFEEVLSSTAHASAQSLAGGSRRTKEEELQC.

Residues 1-20 (MEAQAQGLLETEPLQGTDED) form a disordered region. The stretch at 22–73 (VASADFSSMLSEEEKEELKAELVQLEDEITTLRQVLSAKERHLVEIKQKLGM) forms a coiled coil. A phosphoserine mark is found at serine 29, serine 86, serine 122, and serine 131. The residue at position 133 (arginine 133) is an Omega-N-methylarginine. Phosphothreonine is present on threonine 146. Phosphoserine occurs at positions 149 and 174.

The protein belongs to the TPD52 family. As to quaternary structure, forms a homodimer or heterodimer with other members of the family.

This Homo sapiens (Human) protein is Tumor protein D53 (TPD52L1).